We begin with the raw amino-acid sequence, 746 residues long: Alpha-1,4-glucan:maltose-1-phosphate maltosyltransferase (746 aa).

Residues 1–43 (MAAVQHRATTRTSNTDNSTTKTKSKATSARKSPATKRKRVSAE) form a disordered region. Residues 10 to 32 (TRTSNTDNSTTKTKSKATSARKS) are compositionally biased toward low complexity. Lys-343, Gln-403, and Asp-438 together coordinate alpha-maltose 1-phosphate. Residue Asp-473 is the Nucleophile of the active site. Asn-474 lines the alpha-maltose 1-phosphate pocket. Glu-502 serves as the catalytic Proton donor. 612 to 613 (KY) contributes to the alpha-maltose 1-phosphate binding site.

The protein belongs to the glycosyl hydrolase 13 family. GlgE subfamily. Homodimer.

The enzyme catalyses alpha-maltose 1-phosphate + [(1-&gt;4)-alpha-D-glucosyl](n) = [(1-&gt;4)-alpha-D-glucosyl](n+2) + phosphate. Functionally, maltosyltransferase that uses maltose 1-phosphate (M1P) as the sugar donor to elongate linear or branched alpha-(1-&gt;4)-glucans. Is involved in a branched alpha-glucan biosynthetic pathway from trehalose, together with TreS, Mak and GlgB. The sequence is that of Alpha-1,4-glucan:maltose-1-phosphate maltosyltransferase from Bifidobacterium longum (strain NCC 2705).